A 156-amino-acid chain; its full sequence is Small ribosomal subunit protein uS7 (156 aa).

This sequence belongs to the universal ribosomal protein uS7 family. In terms of assembly, part of the 30S ribosomal subunit. Contacts proteins S9 and S11.

Its function is as follows. One of the primary rRNA binding proteins, it binds directly to 16S rRNA where it nucleates assembly of the head domain of the 30S subunit. Is located at the subunit interface close to the decoding center, probably blocks exit of the E-site tRNA. This chain is Small ribosomal subunit protein uS7, found in Streptococcus agalactiae serotype Ia (strain ATCC 27591 / A909 / CDC SS700).